The primary structure comprises 132 residues: ATP synthase epsilon chain (132 aa).

Belongs to the ATPase epsilon chain family. F-type ATPases have 2 components, CF(1) - the catalytic core - and CF(0) - the membrane proton channel. CF(1) has five subunits: alpha(3), beta(3), gamma(1), delta(1), epsilon(1). CF(0) has three main subunits: a, b and c.

It localises to the cell membrane. In terms of biological role, produces ATP from ADP in the presence of a proton gradient across the membrane. This chain is ATP synthase epsilon chain (atpC), found in Bacillus caldotenax.